The following is a 309-amino-acid chain: Uricase (309 aa).

An N-acetylalanine modification is found at A2. Active-site charge relay system residues include K16 and T63. The urate site is built by T63, D64, F165, R182, V237, Q238, and N264. The active-site Charge relay system is H266. The short motif at 307 to 309 is the Microbody targeting signal element; sequence SKL.

The protein belongs to the uricase family.

The protein resides in the peroxisome. It carries out the reaction urate + O2 + H2O = 5-hydroxyisourate + H2O2. The protein operates within purine metabolism; urate degradation; (S)-allantoin from urate: step 1/3. Functionally, catalyzes the oxidation of uric acid to 5-hydroxyisourate, which is further processed to form (S)-allantoin. The protein is Uricase of Arabidopsis thaliana (Mouse-ear cress).